Here is a 117-residue protein sequence, read N- to C-terminus: Large ribosomal subunit protein uL18 (117 aa).

The protein belongs to the universal ribosomal protein uL18 family. As to quaternary structure, part of the 50S ribosomal subunit; part of the 5S rRNA/L5/L18/L25 subcomplex. Contacts the 5S and 23S rRNAs.

Its function is as follows. This is one of the proteins that bind and probably mediate the attachment of the 5S RNA into the large ribosomal subunit, where it forms part of the central protuberance. This is Large ribosomal subunit protein uL18 from Halorhodospira halophila (strain DSM 244 / SL1) (Ectothiorhodospira halophila (strain DSM 244 / SL1)).